A 321-amino-acid chain; its full sequence is Arabinan endo-1,5-alpha-L-arabinosidase A (321 aa).

A signal peptide spans 1 to 19 (MYQLLSVASVPLLASLVHG). The active-site Proton acceptor is D34. The active-site Proton donor is the E200. N-linked (GlcNAc...) asparagine glycosylation occurs at N295.

The protein belongs to the glycosyl hydrolase 43 family.

The enzyme catalyses Endohydrolysis of (1-&gt;5)-alpha-arabinofuranosidic linkages in (1-&gt;5)-arabinans.. Its pathway is glycan metabolism; L-arabinan degradation. Its function is as follows. Its preferred substrate is linear 1,5-alpha-L-arabinan. The enzyme activity is progressively reduced as 1,5-alpha-chains become shorter or more highly substituted. The sequence is that of Arabinan endo-1,5-alpha-L-arabinosidase A (abnA) from Aspergillus niger.